A 106-amino-acid polypeptide reads, in one-letter code: Urease subunit beta (106 aa).

The protein belongs to the urease beta subunit family. Heterotrimer of UreA (gamma), UreB (beta) and UreC (alpha) subunits. Three heterotrimers associate to form the active enzyme.

It is found in the cytoplasm. The enzyme catalyses urea + 2 H2O + H(+) = hydrogencarbonate + 2 NH4(+). It participates in nitrogen metabolism; urea degradation; CO(2) and NH(3) from urea (urease route): step 1/1. This chain is Urease subunit beta, found in Alkalilimnicola ehrlichii (strain ATCC BAA-1101 / DSM 17681 / MLHE-1).